We begin with the raw amino-acid sequence, 585 residues long: MGSIEEEARPLIEEGLILQEVKLYAEDGSVDFNGNPPLKEKTGNWKACPFILGNECCERLAYYGIAGNLITYLTTKLHQGNVSAATNVTTWQGTCYLTPLIGAVLADAYWGRYWTIACFSGIYFIGMSALTLSASVPALKPAECIGDFCPSATPAQYAMFFGGLYLIALGTGGIKPCVSSFGADQFDDTDSRERVRKASFFNWFYFSINIGALVSSSLLVWIQENRGWGLGFGIPTVFMGLAIASFFFGTPLYRFQKPGGSPITRISQVVVASFRKSSVKVPEDATLLYETQDKNSAIAGSRKIEHTDDCQYLDKAAVISEEESKSGDYSNSWRLCTVTQVEELKILIRMFPIWASGIIFSAVYAQMSTMFVQQGRAMNCKIGSFQLPPAALGTFDTASVIIWVPLYDRFIVPLARKFTGVDKGFTEIQRMGIGLFVSVLCMAAAAIVEIIRLHMANDLGLVESGAPVPISVLWQIPQYFILGAAEVFYFIGQLEFFYDQSPDAMRSLCSALALLTNALGNYLSSLILTLVTYFTTRNGQEGWISDNLNSGHLDYFFWLLAGLSLVNMAVYFFSAARYKQKKASS.

Glycine 2 carries the post-translational modification N-acetylglycine. Residues 91–111 form a helical membrane-spanning segment; it reads WQGTCYLTPLIGAVLADAYWG. Phosphothreonine is present on threonine 115. A run of 10 helical transmembrane segments spans residues 116 to 136, 154 to 174, 200 to 220, 228 to 248, 351 to 371, 387 to 407, 431 to 451, 472 to 492, 511 to 531, and 556 to 576; these read IACF…SASV, PAQY…TGGI, FFNW…SLLV, WGLG…SFFF, FPIW…STMF, LPPA…VPLY, MGIG…VEII, VLWQ…YFIG, ALAL…LTLV, and FFWL…FSAA.

The protein belongs to the major facilitator superfamily. Proton-dependent oligopeptide transporter (POT/PTR) (TC 2.A.17) family. As to expression, highly expressed in young leaves, roots and germinating seeds, intermediately in stems, flowers and mature leaves and at low level in siliques.

Its subcellular location is the vacuole membrane. Inhibited by leucyl-ethionine. Its function is as follows. Peptide transporter. Mediates the transport of di- and tripeptides. High affinity, low capacity transporter. Can also transport histidine. This chain is Protein NRT1/ PTR FAMILY 8.3 (NPF8.3), found in Arabidopsis thaliana (Mouse-ear cress).